We begin with the raw amino-acid sequence, 363 residues long: UDP-N-acetylglucosamine--N-acetylmuramyl-(pentapeptide) pyrophosphoryl-undecaprenol N-acetylglucosamine transferase (363 aa).

UDP-N-acetyl-alpha-D-glucosamine is bound by residues 10–12, Asn124, Ser195, and Gln295; that span reads TGG.

It belongs to the glycosyltransferase 28 family. MurG subfamily.

Its subcellular location is the cell membrane. The catalysed reaction is di-trans,octa-cis-undecaprenyl diphospho-N-acetyl-alpha-D-muramoyl-L-alanyl-D-glutamyl-meso-2,6-diaminopimeloyl-D-alanyl-D-alanine + UDP-N-acetyl-alpha-D-glucosamine = di-trans,octa-cis-undecaprenyl diphospho-[N-acetyl-alpha-D-glucosaminyl-(1-&gt;4)]-N-acetyl-alpha-D-muramoyl-L-alanyl-D-glutamyl-meso-2,6-diaminopimeloyl-D-alanyl-D-alanine + UDP + H(+). Its pathway is cell wall biogenesis; peptidoglycan biosynthesis. In terms of biological role, cell wall formation. Catalyzes the transfer of a GlcNAc subunit on undecaprenyl-pyrophosphoryl-MurNAc-pentapeptide (lipid intermediate I) to form undecaprenyl-pyrophosphoryl-MurNAc-(pentapeptide)GlcNAc (lipid intermediate II). The chain is UDP-N-acetylglucosamine--N-acetylmuramyl-(pentapeptide) pyrophosphoryl-undecaprenol N-acetylglucosamine transferase from Bacillus subtilis (strain 168).